The primary structure comprises 771 residues: Hyperosmolality-gated Ca2+ permeable channel 1.3 (771 aa).

A helical membrane pass occupies residues 7–27 (IGVAAAINILTAIIFLLAFAI). Ser54 carries the post-translational modification Phosphoserine. Transmembrane regions (helical) follow at residues 101–121 (IYLIGLKIFVPIALLAWSILV), 158–178 (FWTHLVMAYAFTFWTCYVLMK), 375–395 (LIMHIAFFFLTFFFMIPIAFV), 427–447 (FLPGIVLKLFLIFLPSILMVM), 467–487 (YYIFNLINVFLGSVITGSAFE), 512–532 (ATFFITYIMVDGWAGIAGEIL), 584–604 (PVTPVLLPFIIIFFALAYLVF), 630–650 (IISALIIAQILLMGLLSTKGA), and 651–671 (AQSTPFLLFLPIITFFFHRYC). The tract at residues 744–771 (VPTKRQSRINTPAVSHASRGSSRSPPSK) is disordered. The segment covering 751-771 (RINTPAVSHASRGSSRSPPSK) has biased composition (polar residues).

Belongs to the CSC1 (TC 1.A.17) family. Phosphorylated at Ser-54 by BIK1 in response to pathogen-associated molecular pattern (PAMP) perception, promoting its activation. In terms of tissue distribution, preferentially expressed in guard cells.

Its subcellular location is the cell membrane. It catalyses the reaction Ca(2+)(in) = Ca(2+)(out). Activated following phosphorylation at Ser-54 by BIK1. Calcium-permeable channel that plays a key role in plant stomatal immunity. In response to pathogen-associated molecular pattern (PAMP) perception, phosphorylated and activated by BIK1, triggering rapid influx of calcium ions across the plasma membrane, leading to stomatal closure. The sequence is that of Hyperosmolality-gated Ca2+ permeable channel 1.3 from Arabidopsis thaliana (Mouse-ear cress).